Here is a 361-residue protein sequence, read N- to C-terminus: RLA class I histocompatibility antigen, alpha chain 19-1 (361 aa).

The signal sequence occupies residues 1-24; it reads MGSIPPRTLLLLLAGALTLKDTQA. The interval 25–114 is alpha-1; that stretch reads GSHSMRYFYT…ALRYYNQSAA (90 aa). Over 25-308 the chain is Extracellular; the sequence is GSHSMRYFYT…EPPAQPTALI (284 aa). Residue Asn-110 is glycosylated (N-linked (GlcNAc...) asparagine). The segment at 115–206 is alpha-2; it reads GSHTFQTMFG…EMGKETLQRA (92 aa). 2 disulfides stabilise this stretch: Cys-125–Cys-188 and Cys-227–Cys-283. An alpha-3 region spans residues 207 to 298; the sequence is DPPKAHVTHH…GLPEPLTLTW (92 aa). Positions 209–297 constitute an Ig-like C1-type domain; it reads PKAHVTHHPA…EGLPEPLTLT (89 aa). Positions 299 to 308 are connecting peptide; the sequence is EPPAQPTALI. Residues 309-329 form a helical membrane-spanning segment; it reads VGIVAGVLGVLLILGAVVAVV. Residues 330–361 lie on the Cytoplasmic side of the membrane; sequence RRKKHSSDGKGGRYTPAAGGHRDQGSDDSLMP. The interval 335–361 is disordered; sequence SSDGKGGRYTPAAGGHRDQGSDDSLMP. Residues Ser-355 and Ser-358 each carry the phosphoserine modification.

Belongs to the MHC class I family. As to quaternary structure, heterodimer of an alpha chain and a beta chain (beta-2-microglobulin).

The protein resides in the membrane. Involved in the presentation of foreign antigens to the immune system. This Oryctolagus cuniculus (Rabbit) protein is RLA class I histocompatibility antigen, alpha chain 19-1.